We begin with the raw amino-acid sequence, 356 residues long: D-alanine--D-alanine ligase (356 aa).

The 206-residue stretch at 134–339 (KQLFEHRGLP…YPELITKLIE (206 aa)) folds into the ATP-grasp domain. ATP is bound at residue 167-222 (NDKLNYPVFVKPANLGSSVGISKCNNEAELKEGIKEAFQFDRKLVIEQGVNAREIE). The Mg(2+) site is built by aspartate 293, glutamate 306, and asparagine 308.

The protein belongs to the D-alanine--D-alanine ligase family. It depends on Mg(2+) as a cofactor. The cofactor is Mn(2+).

The protein localises to the cytoplasm. The enzyme catalyses 2 D-alanine + ATP = D-alanyl-D-alanine + ADP + phosphate + H(+). The protein operates within cell wall biogenesis; peptidoglycan biosynthesis. Cell wall formation. This is D-alanine--D-alanine ligase from Staphylococcus aureus (strain Mu3 / ATCC 700698).